The sequence spans 306 residues: D-alanine--D-alanine ligase B (306 aa).

Positions 101–303 constitute an ATP-grasp domain; the sequence is KLLWQGAGLP…FSQLVVRILE (203 aa). 134 to 189 is an ATP binding site; sequence ISALGLPLIVKPSREGSSVGMTKVVEENALQGALSLAFQHDDEILIEKWLCGPEFT. 3 residues coordinate Mg(2+): Asp-257, Glu-270, and Asn-272.

The protein belongs to the D-alanine--D-alanine ligase family. As to quaternary structure, monomer. Requires Mg(2+) as cofactor. Mn(2+) is required as a cofactor.

The protein localises to the cytoplasm. It catalyses the reaction 2 D-alanine + ATP = D-alanyl-D-alanine + ADP + phosphate + H(+). Its pathway is cell wall biogenesis; peptidoglycan biosynthesis. Its function is as follows. Cell wall formation. This Salmonella typhimurium (strain LT2 / SGSC1412 / ATCC 700720) protein is D-alanine--D-alanine ligase B (ddlB).